The primary structure comprises 3674 residues: Dystrophin-1 (3674 aa).

The segment at 1 to 25 (MLFSGASTAKPKKDEKKDKKSDRDP) is disordered. Basic and acidic residues predominate over residues 11–25 (PKKDEKKDKKSDRDP). Residues 30–39 (QEWVFVRWAN) form an actin-binding region. Positions 129 to 234 (EKLSEAIKQW…YLMSLYLAMI (106 aa)) constitute a Calponin-homology (CH) domain. A disordered region spans residues 265 to 325 (SQPSTSSSSA…KSGKSKKARR (61 aa)). 3 Spectrin repeats span residues 327–435 (EQLA…VLQQ), 436–541 (QIHL…KLDG), and 612–656 (CELV…TLVK). Residues 655-674 (VKSGKADVKQVQESQNEQKE) show a composition bias toward basic and acidic residues. Disordered regions lie at residues 655–689 (VKSGKADVKQVQESQNEQKEQPASSEGLSTDTEGE), 968–991 (NSQMSNETVEKAETRKAEMEEKRR), 1587–1606 (ASAEKAPAPELRDARLSSPS), 1796–1833 (LSATEKKPVETVKSTIPDRPEVPEEPEKSSPDRTSRSS), and 2387–2466 (MNDS…GSTG). A compositionally biased stretch (polar residues) spans 675 to 685 (QPASSEGLSTD). Residues 975–991 (TVEKAETRKAEMEEKRR) show a composition bias toward basic and acidic residues. Residues 1796–1830 (LSATEKKPVETVKSTIPDRPEVPEEPEKSSPDRTS) are compositionally biased toward basic and acidic residues. Residues 2391–2411 (GGDTTESRSTVVEMTSVHTKQ) show a composition bias toward polar residues. 4 Spectrin repeats span residues 2576–2673 (RNEM…VLEA), 2725–2789 (FKTL…RLEK), 2792–2905 (QEWE…RLKK), and 2926–3032 (QRLQ…AVRN). Positions 3047-3081 (QSVTLPWQRAISKSNLLPYYIEQTSEKTQWEHPVW) constitute a WW domain. The ZZ-type zinc finger occupies 3301 to 3357 (KHASKCNVCKMFPIIGIRYRCLTCFNCDLCQNCFFSQRTAKSHRTNHPMQEYCEKTT). Residues Cys-3306, Cys-3309, Cys-3321, Cys-3324, Cys-3330, Cys-3333, His-3343, and His-3347 each contribute to the Zn(2+) site. Disordered regions lie at residues 3481 to 3522 (STME…TQSQ) and 3568 to 3645 (KQQA…QMQN). Over residues 3568–3579 (KQQAPLSTNSLL) the composition is skewed to polar residues.

Component of the dystrophin glycoprotein complex (DGC). Interacts with dyb-1 and stn-1 to form the DGC. Interacts with stn-2. In terms of tissue distribution, expressed in body wall, head, pharyngeal and vulval muscles, from late embryogenesis to adulthood (at protein level).

Its subcellular location is the cell membrane. It localises to the sarcolemma. The protein localises to the cytoplasm. The protein resides in the cytoskeleton. Its function is as follows. Plays a role in cholinergic transmission and as a functional partner of dystrobrevin (dyb-1), necessary for muscle maintenance. Required for neuronal positioning. May play a role in the localization of slo-1 near dense bodies in the muscle. This Caenorhabditis elegans protein is Dystrophin-1 (dys-1).